We begin with the raw amino-acid sequence, 317 residues long: Pectinesterase 31 (317 aa).

Substrate contacts are provided by T91 and Q121. Residue D144 is the Proton donor of the active site. The active-site Nucleophile is the D165. Residues R222 and W224 each contribute to the substrate site.

Belongs to the pectinesterase family. In terms of tissue distribution, expressed in siliques.

It catalyses the reaction [(1-&gt;4)-alpha-D-galacturonosyl methyl ester](n) + n H2O = [(1-&gt;4)-alpha-D-galacturonosyl](n) + n methanol + n H(+). The protein operates within glycan metabolism; pectin degradation; 2-dehydro-3-deoxy-D-gluconate from pectin: step 1/5. Its activity is regulated as follows. Does not require salt for activity. Not inhibited by kiwi pectin methylesterase inhibitor (PMEI). Its function is as follows. Acts in the modification of cell walls via demethylesterification of cell wall pectin. Acts in a blockwise manner, resulting in a cell wall rigidification. This is Pectinesterase 31 (PME31) from Arabidopsis thaliana (Mouse-ear cress).